The primary structure comprises 57 residues: MFRYTRFEKARIIGARALQIALGAPVLVDVPEGSTPLQAAIIEFEKGIIPITVIRPS.

The protein belongs to the archaeal Rpo6/eukaryotic RPB6 RNA polymerase subunit family. As to quaternary structure, part of the RNA polymerase complex.

The protein resides in the cytoplasm. It catalyses the reaction RNA(n) + a ribonucleoside 5'-triphosphate = RNA(n+1) + diphosphate. In terms of biological role, DNA-dependent RNA polymerase (RNAP) catalyzes the transcription of DNA into RNA using the four ribonucleoside triphosphates as substrates. In Thermococcus gammatolerans (strain DSM 15229 / JCM 11827 / EJ3), this protein is DNA-directed RNA polymerase subunit Rpo6.